Here is a 568-residue protein sequence, read N- to C-terminus: Sulfite reductase [NADPH] hemoprotein beta-component (568 aa).

[4Fe-4S] cluster contacts are provided by C425, C431, C470, and C474. Position 474 (C474) interacts with siroheme.

Belongs to the nitrite and sulfite reductase 4Fe-4S domain family. Alpha(8)-beta(8). The alpha component is a flavoprotein, the beta component is a hemoprotein. Requires siroheme as cofactor. [4Fe-4S] cluster is required as a cofactor.

The enzyme catalyses hydrogen sulfide + 3 NADP(+) + 3 H2O = sulfite + 3 NADPH + 4 H(+). Its pathway is sulfur metabolism; hydrogen sulfide biosynthesis; hydrogen sulfide from sulfite (NADPH route): step 1/1. In terms of biological role, component of the sulfite reductase complex that catalyzes the 6-electron reduction of sulfite to sulfide. This is one of several activities required for the biosynthesis of L-cysteine from sulfate. This Xanthomonas euvesicatoria pv. vesicatoria (strain 85-10) (Xanthomonas campestris pv. vesicatoria) protein is Sulfite reductase [NADPH] hemoprotein beta-component.